The primary structure comprises 321 residues: Glucokinase (321 aa).

8–13 (GDVGGT) is an ATP binding site.

The protein belongs to the bacterial glucokinase family.

It localises to the cytoplasm. The enzyme catalyses D-glucose + ATP = D-glucose 6-phosphate + ADP + H(+). The protein is Glucokinase of Klebsiella pneumoniae subsp. pneumoniae (strain ATCC 700721 / MGH 78578).